We begin with the raw amino-acid sequence, 136 residues long: Putative pre-16S rRNA nuclease (136 aa).

The protein belongs to the YqgF nuclease family.

It localises to the cytoplasm. Its function is as follows. Could be a nuclease involved in processing of the 5'-end of pre-16S rRNA. This chain is Putative pre-16S rRNA nuclease, found in Francisella tularensis subsp. mediasiatica (strain FSC147).